The following is a 280-amino-acid chain: 2-dehydro-3-deoxyphosphooctonate aldolase (280 aa).

It belongs to the KdsA family.

It localises to the cytoplasm. The enzyme catalyses D-arabinose 5-phosphate + phosphoenolpyruvate + H2O = 3-deoxy-alpha-D-manno-2-octulosonate-8-phosphate + phosphate. Its pathway is carbohydrate biosynthesis; 3-deoxy-D-manno-octulosonate biosynthesis; 3-deoxy-D-manno-octulosonate from D-ribulose 5-phosphate: step 2/3. It participates in bacterial outer membrane biogenesis; lipopolysaccharide biosynthesis. This chain is 2-dehydro-3-deoxyphosphooctonate aldolase, found in Rhizobium meliloti (strain 1021) (Ensifer meliloti).